A 36-amino-acid polypeptide reads, in one-letter code: Potassium channel toxin alpha-KTx 16.1 (36 aa).

3 cysteine pairs are disulfide-bonded: Cys-7/Cys-28, Cys-13/Cys-33, and Cys-17/Cys-35.

It belongs to the short scorpion toxin superfamily. Potassium channel inhibitor family. Alpha-KTx 16 subfamily. As to expression, expressed by the venom gland.

The protein localises to the secreted. Its function is as follows. Blocks calcium-activated potassium channels. This chain is Potassium channel toxin alpha-KTx 16.1, found in Hottentotta tamulus (Eastern Indian scorpion).